Consider the following 380-residue polypeptide: Glucose-1-phosphate adenylyltransferase (380 aa).

Alpha-D-glucose 1-phosphate-binding positions include Gly-164, 179-180 (EK), and Ser-190.

This sequence belongs to the bacterial/plant glucose-1-phosphate adenylyltransferase family. In terms of assembly, homotetramer.

It catalyses the reaction alpha-D-glucose 1-phosphate + ATP + H(+) = ADP-alpha-D-glucose + diphosphate. It participates in glycan biosynthesis; glycogen biosynthesis. In terms of biological role, involved in the biosynthesis of ADP-glucose, a building block required for the elongation reactions to produce glycogen. Catalyzes the reaction between ATP and alpha-D-glucose 1-phosphate (G1P) to produce pyrophosphate and ADP-Glc. The protein is Glucose-1-phosphate adenylyltransferase of Streptococcus gordonii (strain Challis / ATCC 35105 / BCRC 15272 / CH1 / DL1 / V288).